Reading from the N-terminus, the 62-residue chain is Large ribosomal subunit protein bL32 (62 aa).

Basic residues predominate over residues M1–H19. Residues M1–S23 are disordered.

This sequence belongs to the bacterial ribosomal protein bL32 family.

The polypeptide is Large ribosomal subunit protein bL32 (Koribacter versatilis (strain Ellin345)).